A 582-amino-acid chain; its full sequence is Formate--tetrahydrofolate ligase (582 aa).

Residue 65 to 72 participates in ATP binding; that stretch reads TPLGEGKT.

The protein belongs to the formate--tetrahydrofolate ligase family.

The enzyme catalyses (6S)-5,6,7,8-tetrahydrofolate + formate + ATP = (6R)-10-formyltetrahydrofolate + ADP + phosphate. It functions in the pathway one-carbon metabolism; tetrahydrofolate interconversion. In Vibrio campbellii (strain ATCC BAA-1116), this protein is Formate--tetrahydrofolate ligase.